We begin with the raw amino-acid sequence, 623 residues long: NAD-dependent malic enzyme 1, mitochondrial (623 aa).

The transit peptide at 1-38 (MGIANKLRLSSSSLSRILHRRILYSSAVRSFTTSEGHR) directs the protein to the mitochondrion. Tyr143 acts as the Proton donor in catalysis. Arg196 serves as a coordination point for NAD(+). The active-site Proton acceptor is Lys214. A divalent metal cation is bound by residues Glu285, Asp286, and Asp309. The NAD(+) site is built by Asp309 and Asn464.

This sequence belongs to the malic enzymes family. As to quaternary structure, homodimer. Heterodimer of two related subunits in NAD-MEH complex. Interacts with NAD-ME2. Requires Mg(2+) as cofactor. Mn(2+) is required as a cofactor. In terms of tissue distribution, expressed in leaves, stems, flowers, and roots (at protein level).

The protein localises to the mitochondrion. It carries out the reaction (S)-malate + NAD(+) = pyruvate + CO2 + NADH. With respect to regulation, activated by oxaloacetate (OAA), 2-ketoglutarate, succinate and fumarate as homodimer and by OAA, 2-ketoglutarate, succinate, fumarate and coenzyme A (acetyl-CoA and CoA) as heterodimer NAD-MEH. Involved in the regulation of sugars and amino acids metabolisms during the night period. This Arabidopsis thaliana (Mouse-ear cress) protein is NAD-dependent malic enzyme 1, mitochondrial (NAD-ME1).